Reading from the N-terminus, the 203-residue chain is Shikimate kinase (203 aa).

ATP is bound at residue 32-37 (GAGKTA). Thr36 provides a ligand contact to Mg(2+). Asp54, Arg78, and Gly100 together coordinate substrate. Arg138 contributes to the ATP binding site. A substrate-binding site is contributed by Arg157.

Belongs to the shikimate kinase family. Monomer. Requires Mg(2+) as cofactor.

The protein resides in the cytoplasm. It catalyses the reaction shikimate + ATP = 3-phosphoshikimate + ADP + H(+). Its pathway is metabolic intermediate biosynthesis; chorismate biosynthesis; chorismate from D-erythrose 4-phosphate and phosphoenolpyruvate: step 5/7. Catalyzes the specific phosphorylation of the 3-hydroxyl group of shikimic acid using ATP as a cosubstrate. This chain is Shikimate kinase, found in Mesorhizobium japonicum (strain LMG 29417 / CECT 9101 / MAFF 303099) (Mesorhizobium loti (strain MAFF 303099)).